We begin with the raw amino-acid sequence, 405 residues long: Phosphoglycerate kinase (405 aa).

Residues 24-26, R40, 63-66, R122, and R162 contribute to the substrate site; these read DFN and HLGR. ATP contacts are provided by residues K213, E332, and 361–364; that span reads GGDS.

This sequence belongs to the phosphoglycerate kinase family. Monomer.

The protein localises to the cytoplasm. The enzyme catalyses (2R)-3-phosphoglycerate + ATP = (2R)-3-phospho-glyceroyl phosphate + ADP. It functions in the pathway carbohydrate degradation; glycolysis; pyruvate from D-glyceraldehyde 3-phosphate: step 2/5. This is Phosphoglycerate kinase from Corynebacterium diphtheriae (strain ATCC 700971 / NCTC 13129 / Biotype gravis).